A 190-amino-acid chain; its full sequence is MGARAQPTPSWAREPLFEKAVTPSDVGKLNRLLVPKQHAEKHFPLRRTSSDASGVLLNFEDGEGKVWRFRYSCWNSSQSYVLTKGWSRFVREKGLRAGDTIVFSGSAYGPDKLLFIDCKKNNTAAATGDEKPITSGEATRVVRLFGMDITGGGGDCRKRERAVEMGQEAFLMKRQCVVHQRTPALGALLL.

The TF-B3 DNA-binding region spans 17 to 121 (FEKAVTPSDV…KLLFIDCKKN (105 aa)).

It is found in the nucleus. The chain is B3 domain-containing protein Os02g0764100 from Oryza sativa subsp. japonica (Rice).